The primary structure comprises 676 residues: MPVDSTSELLKHYEVYETIGSGGFAKVKLGRHKLTGEKVAIKIMEKKDLGDDLPRVKIEIEAMKNLSHQHVCRLYHVIETTSKIYMVLEYCPGGELFDYIIAKDRLSEEETRVFFRQIISALAYVHSQGYAHRDLKPENLLIDEDHNLKLIDFGLCAKPKGGLGFELLTCCGSPAYAAPELIQGKAYIGSEADVWSMGVLLYALLCGFLPFDDDNCMVLYRKITRGKYSNPHWLSPSSILLLNQMMQVDPKRRLTVKHLLDHPWVMRGYSTPVEWHSKYPLGHIDEDCITEMAVTFKQSKQRTIQLVSEWKYDQITATYLLLLAKKRQGRPVRLRAECPVIDIVCSPLQDMQLKKSLRFTEDDDGVHPVVLGSMVFPPDCYDDENPWTPLTPKNTHTTNTPRMKLYPETTEKWNEMAYSPVIEHSRPCRQKPERRERTKENKENLAVPGTDGDVFALPAPRTPTSSRKVKSNRTVMTTPNHNNNKSSEVNKGAGSATKEGSRRREVEQQQNGQQGELNILAFSPERRSRSLDLAGCQVDSGQKRKGGKVFGSLERGLDKVITMLTPSKKRGPRDGPRKIKAQYNVTLTNQTNADQVLNQILSILPEKNVDFVQKGYTLKCHTQSDFGKVTMQFELEVCLLQKPEVVGIRRQRLKGDAWVYKHLVEDILSSSSQWSA.

A Protein kinase domain is found at 13-265 (YEVYETIGSG…VKHLLDHPWV (253 aa)). Residues 19-27 (IGSGGFAKV) and K42 contribute to the ATP site. The active-site Proton acceptor is D134. Position 169 is a phosphothreonine; by autocatalysis (T169). S173 carries the post-translational modification Phosphoserine; by autocatalysis. A UBA-like region spans residues 284-323 (IDEDCITEMAVTFKQSKQRTIQLVSEWKYDQITATYLLLL). An autoinhibitory region region spans residues 328–673 (QGRPVRLRAE…VEDILSSSSQ (346 aa)). The segment covering 423-443 (EHSRPCRQKPERRERTKENKE) has biased composition (basic and acidic residues). The segment at 423–518 (EHSRPCRQKP…QQNGQQGELN (96 aa)) is disordered. A compositionally biased stretch (polar residues) spans 462–489 (TPTSSRKVKSNRTVMTTPNHNNNKSSEV). The span at 508 to 518 (QQQNGQQGELN) shows a compositional bias: low complexity. The KA1 domain occupies 624-673 (SDFGKVTMQFELEVCLLQKPEVVGIRRQRLKGDAWVYKHLVEDILSSSSQ).

It belongs to the protein kinase superfamily. CAMK Ser/Thr protein kinase family. SNF1 subfamily. In terms of processing, autophosphorylated: autophosphorylation of the T-loop at Thr-169 and Ser-173 is required for activation. As to expression, strongly expressed in the eye, gill, kidney, spleen, muscle, ovary and testis and weakly in the heart, liver, and gut. Expressed in the brain and lateral mesoderm at 12 hours post-fertilization (hpf).

It is found in the cell membrane. The catalysed reaction is L-seryl-[protein] + ATP = O-phospho-L-seryl-[protein] + ADP + H(+). The enzyme catalyses L-threonyl-[protein] + ATP = O-phospho-L-threonyl-[protein] + ADP + H(+). Its activity is regulated as follows. Activated by autophosphorylation of the T-loop at Thr-169 and Ser-173: in contrast to other members of the SNF1 subfamily, phosphorylation at Thr-169 is not mediated by STK11/LKB1 but via autophosphorylation instead. In terms of biological role, serine/threonine-protein kinase involved in various processes such as cell cycle regulation, self-renewal of stem cells, apoptosis and splicing regulation. Also plays a role in primitive hematopoiesis, possibly by affecting the expression of genes critical for hematopoiesis. This chain is Maternal embryonic leucine zipper kinase (melk), found in Danio rerio (Zebrafish).